Reading from the N-terminus, the 445-residue chain is POU domain, class 5, transcription factor 1.2 (445 aa).

Composition is skewed to polar residues over residues 76-88 and 164-182; these read SANQLGISGQGNP and IFTSSPDKSGESGISSLDN. 2 disordered regions span residues 76–116 and 139–227; these read SANQ…PSLP and TTVV…GEME. Residues 183–200 are compositionally biased toward low complexity; it reads SRCSSATSSSSGGTNVGT. The POU-specific domain occupies 218–292; that stretch reads EEAPNSGEME…LLRSWLHEVE (75 aa). A DNA-binding region (homeobox) is located at residues 312 to 371; the sequence is KRKHRTSIENNVKCTLENYFMQCSKPSAQEIAQIARELNMEKDVVRVWFCNRRQKGKRQV.

Belongs to the POU transcription factor family. Class-5 subfamily. As to quaternary structure, interacts with the transcription factors tcf7l1/tcf3 and vegt. Initially (stage 9) expressed in all regions of the embryo, becoming localized to the ventroposterior regions by early neurula stages. In adults, expressed at a low level in the brain.

The protein localises to the nucleus. Its function is as follows. Transcription factor that binds to the octamer motif (5'-ATTTGCAT-3'). Antagonizes the activity of nodal/activin signaling during gastrulation to suppress mesendoderm formation. This Xenopus laevis (African clawed frog) protein is POU domain, class 5, transcription factor 1.2 (pou5f1.2).